The primary structure comprises 133 residues: FPRL1 inhibitory protein (133 aa).

The first 28 residues, 1 to 28, serve as a signal peptide directing secretion; the sequence is MKKNITKTIIASTVIAAGLLTQTNDAKA.

This sequence belongs to the CHIPS/FLIPr family.

Its subcellular location is the secreted. Functionally, may be involved in countering the first line of host defense mechanisms. Impairs the leukocyte response to FPRL1 agonists by binding directly to host FPRL1. This chain is FPRL1 inhibitory protein (flr), found in Staphylococcus aureus (strain USA300).